The following is a 172-amino-acid chain: Cell division protein SepF (172 aa).

The tract at residues 18–73 (RRYDEEDLPDEELTTEVYSDDGYEPSSEVTQLHHHDSNEQHARGHKAVQHRRRSEL) is disordered. Residues 22–40 (EEDLPDEELTTEVYSDDGY) show a composition bias toward acidic residues. The segment covering 48 to 59 (QLHHHDSNEQHA) has biased composition (basic and acidic residues). The span at 60–70 (RGHKAVQHRRR) shows a compositional bias: basic residues.

It belongs to the SepF family. As to quaternary structure, homodimer. Interacts with FtsZ.

The protein localises to the cytoplasm. In terms of biological role, cell division protein that is part of the divisome complex and is recruited early to the Z-ring. Probably stimulates Z-ring formation, perhaps through the cross-linking of FtsZ protofilaments. Its function overlaps with FtsA. The polypeptide is Cell division protein SepF (Cutibacterium acnes (strain DSM 16379 / KPA171202) (Propionibacterium acnes)).